The following is a 128-amino-acid chain: Aspartate 1-decarboxylase (128 aa).

S25 functions as the Schiff-base intermediate with substrate; via pyruvic acid in the catalytic mechanism. S25 bears the Pyruvic acid (Ser) mark. A substrate-binding site is contributed by T57. The active-site Proton donor is Y58. A substrate-binding site is contributed by 73–75; it reads GAA.

Belongs to the PanD family. In terms of assembly, heterooctamer of four alpha and four beta subunits. Pyruvate is required as a cofactor. Is synthesized initially as an inactive proenzyme, which is activated by self-cleavage at a specific serine bond to produce a beta-subunit with a hydroxyl group at its C-terminus and an alpha-subunit with a pyruvoyl group at its N-terminus.

It localises to the cytoplasm. It carries out the reaction L-aspartate + H(+) = beta-alanine + CO2. It functions in the pathway cofactor biosynthesis; (R)-pantothenate biosynthesis; beta-alanine from L-aspartate: step 1/1. Catalyzes the pyruvoyl-dependent decarboxylation of aspartate to produce beta-alanine. The chain is Aspartate 1-decarboxylase from Moorella thermoacetica (strain ATCC 39073 / JCM 9320).